The following is a 274-amino-acid chain: Proteasome subunit beta type-7-B (274 aa).

A propeptide spans 1-37 (MSQSSVDIPPKGGFSFDLCKRNDMLTQKGLKAPSFLK) (removed in mature form). The active-site Nucleophile is Thr40.

Belongs to the peptidase T1B family. Component of the 20S core complex of the 26S proteasome. The 26S proteasome is composed of a core protease (CP), known as the 20S proteasome, capped at one or both ends by the 19S regulatory particle (RP/PA700). The 20S proteasome core is composed of 28 subunits that are arranged in four stacked rings, resulting in a barrel-shaped structure. The two end rings are each formed by seven alpha subunits, and the two central rings are each formed by seven beta subunits. The catalytic chamber with the active sites is on the inside of the barrel.

It localises to the cytoplasm. The protein resides in the nucleus. It carries out the reaction Cleavage of peptide bonds with very broad specificity.. Functionally, the proteasome is a multicatalytic proteinase complex which is characterized by its ability to cleave peptides with Arg, Phe, Tyr, Leu, and Glu adjacent to the leaving group at neutral or slightly basic pH. The proteasome has an ATP-dependent proteolytic activity. The sequence is that of Proteasome subunit beta type-7-B (PBB2) from Arabidopsis thaliana (Mouse-ear cress).